Here is a 178-residue protein sequence, read N- to C-terminus: GTP-dependent dephospho-CoA kinase (178 aa).

5 residues coordinate GTP: D55, V57, D74, K76, and E127.

Belongs to the GTP-dependent DPCK family.

It carries out the reaction 3'-dephospho-CoA + GTP = GDP + CoA + H(+). The protein operates within cofactor biosynthesis; coenzyme A biosynthesis. Functionally, catalyzes the GTP-dependent phosphorylation of the 3'-hydroxyl group of dephosphocoenzyme A to form coenzyme A (CoA). The chain is GTP-dependent dephospho-CoA kinase from Saccharolobus islandicus (strain Y.G.57.14 / Yellowstone #1) (Sulfolobus islandicus).